Here is a 1172-residue protein sequence, read N- to C-terminus: Thrombospondin-2 (1172 aa).

Residues 1-18 (MLWALALLALGIGPRASA) form the signal peptide. The Laminin G-like domain occupies 19 to 215 (GDHVKDTSFD…LQNVHLVFAD (197 aa)). The interval 19 to 232 (GDHVKDTSFD…KKGCQHSQGA (214 aa)) is heparin-binding. Residues Asn151, Asn316, and Asn330 are each glycosylated (N-linked (GlcNAc...) asparagine). Residues 318–375 (SACVQEGRIFAENETWVVDSCTTCTCKKFKTVCHQITCSPATCANPSFVEGECCPSCS) form the VWFC domain. TSP type-1 domains lie at 381–431 (DEGW…GKCD), 437–492 (NGGW…DPCP), and 494–549 (DGRW…RSCP). Intrachain disulfides connect Cys393–Cys425, Cys397–Cys430, Cys408–Cys415, Cys449–Cys486, Cys453–Cys491, Cys464–Cys476, Cys506–Cys543, Cys510–Cys548, Cys521–Cys533, Cys553–Cys564, Cys558–Cys574, Cys577–Cys588, Cys594–Cys610, Cys601–Cys619, Cys622–Cys646, Cys652–Cys665, Cys659–Cys678, Cys680–Cys691, Cys707–Cys715, Cys720–Cys740, Cys756–Cys776, Cys779–Cys799, Cys815–Cys835, Cys838–Cys858, Cys876–Cys896, Cys912–Cys932, and Cys948–Cys1169. An N-linked (GlcNAc...) asparagine glycan is attached at Asn457. An EGF-like 1 domain is found at 549–589 (PIDGCLSNPCFPGAKCNSFPDGSWSCGSCPVGFLGNGTHCE). Asn584 carries N-linked (GlcNAc...) asparagine glycosylation. The EGF-like 2 domain occupies 648–692 (PENPCKDKTHSCHKNAECIYLGHFSDPMYKCECQIGYAGDGLICG). TSP type-3 repeat units lie at residues 693-728 (EDSDLDGWPNNNLVCATNATYHCIKDNCPKLPNSGQ), 729-764 (EDFDKDGIGDACDEDDDNDGVSDEKDNCQLLFNPRQ), 765-787 (LDYDKDEVGDRCDNCPYVHNPAQ), 788-823 (IDTDNNGEGDACSVDIDGDDVFNERDNCPYVYNTDQ), 824-846 (RDTDGDGVGDHCDNCPLMHNPDQ), 847-884 (IDQDNDLVGDQCDNNEDIDDDGHQNNQDNCPYISNSNQ), 885-920 (ADHDNDGKGDACDSDDDNDGVPDDRDNCRLVFNPDQ), and 921-956 (EDSDGDGRGDICKDDFDNDNVPDIDDVCPENNAITE). Asn710 carries an N-linked (GlcNAc...) asparagine glycan. The tract at residues 727–752 (GQEDFDKDGIGDACDEDDDNDGVSDE) is disordered. A compositionally biased stretch (acidic residues) spans 739 to 749 (ACDEDDDNDGV). The disordered stretch occupies residues 846–938 (QIDQDNDLVG…GDICKDDFDN (93 aa)). Acidic residues predominate over residues 847 to 866 (IDQDNDLVGDQCDNNEDIDD). Residues 870–884 (QNNQDNCPYISNSNQ) are compositionally biased toward polar residues. The segment covering 885-895 (ADHDNDGKGDA) has biased composition (basic and acidic residues). Residues 896–905 (CDSDDDNDGV) are compositionally biased toward acidic residues. The segment covering 925-935 (GDGRGDICKDD) has biased composition (basic and acidic residues). The Cell attachment site motif lies at 928–930 (RGD). The 213-residue stretch at 960–1172 (RNFQMVPLDP…SDLKYECRDA (213 aa)) folds into the TSP C-terminal domain. Asn1069 is a glycosylation site (N-linked (GlcNAc...) asparagine).

The protein belongs to the thrombospondin family. As to quaternary structure, homotrimer; disulfide-linked. Can bind to fibrinogen, fibronectin, laminin and type V collagen. Interacts (via the TSP type I repeats) with CD36; the interaction conveys an antiangiogenic effect. Interacts (via the TSP type I repeats) with HRG; the interaction blocks the antiangiogenic effect of THBS2 with CD36. Can bind to fibrinogen, fibronectin, laminin.

Its function is as follows. Adhesive glycoprotein that mediates cell-to-cell and cell-to-matrix interactions. Ligand for CD36 mediating antiangiogenic properties. This chain is Thrombospondin-2 (Thbs2), found in Mus musculus (Mouse).